A 123-amino-acid polypeptide reads, in one-letter code: Small ribosomal subunit protein uS12 (123 aa).

Residues 1-28 (MPTIQQLIRTERSKVQKKTKSPALKQCP) are disordered. Asp89 carries the post-translational modification 3-methylthioaspartic acid. Residues 104-123 (ATGVKDRKQGRSKYGTKRPK) are disordered. A compositionally biased stretch (basic residues) spans 113-123 (GRSKYGTKRPK).

It belongs to the universal ribosomal protein uS12 family. In terms of assembly, part of the 30S ribosomal subunit. Contacts proteins S8 and S17. May interact with IF1 in the 30S initiation complex.

Functionally, with S4 and S5 plays an important role in translational accuracy. Interacts with and stabilizes bases of the 16S rRNA that are involved in tRNA selection in the A site and with the mRNA backbone. Located at the interface of the 30S and 50S subunits, it traverses the body of the 30S subunit contacting proteins on the other side and probably holding the rRNA structure together. The combined cluster of proteins S8, S12 and S17 appears to hold together the shoulder and platform of the 30S subunit. The sequence is that of Small ribosomal subunit protein uS12 from Gloeothece citriformis (strain PCC 7424) (Cyanothece sp. (strain PCC 7424)).